The primary structure comprises 175 residues: Ribosome maturation factor RimM (175 aa).

Residues Glu-99 to Leu-172 enclose the PRC barrel domain.

Belongs to the RimM family. Binds ribosomal protein uS19.

It is found in the cytoplasm. An accessory protein needed during the final step in the assembly of 30S ribosomal subunit, possibly for assembly of the head region. Essential for efficient processing of 16S rRNA. May be needed both before and after RbfA during the maturation of 16S rRNA. It has affinity for free ribosomal 30S subunits but not for 70S ribosomes. This is Ribosome maturation factor RimM from Synechococcus sp. (strain WH7803).